A 476-amino-acid chain; its full sequence is ATP sulfurylase 2 (476 aa).

A chloroplast-targeting transit peptide spans 1-56 (MSLMIRSSYVSHITLFQPRNSKPSSFTNQISFLSSSNNNPFLNLVYKRNLTMQSVS).

It belongs to the sulfate adenylyltransferase family. Homotetramer. In terms of tissue distribution, mostly expressed in leaves or cotyledons.

It is found in the plastid. The protein resides in the chloroplast. Its subcellular location is the cytoplasm. The enzyme catalyses sulfate + ATP + H(+) = adenosine 5'-phosphosulfate + diphosphate. The protein operates within sulfur metabolism; hydrogen sulfide biosynthesis; sulfite from sulfate: step 1/3. This Arabidopsis thaliana (Mouse-ear cress) protein is ATP sulfurylase 2 (APS2).